We begin with the raw amino-acid sequence, 466 residues long: Adenosylhomocysteinase (466 aa).

3 residues coordinate substrate: Thr57, Asp132, and Glu192. Thr193–Thr195 is an NAD(+) binding site. Residues Lys222 and Asp226 each contribute to the substrate site. NAD(+)-binding positions include Asn227, Gly256–Gly261, Glu279, Asn314, Ile335–His337, and Asn380.

This sequence belongs to the adenosylhomocysteinase family. Requires NAD(+) as cofactor.

Its subcellular location is the cytoplasm. The enzyme catalyses S-adenosyl-L-homocysteine + H2O = L-homocysteine + adenosine. The protein operates within amino-acid biosynthesis; L-homocysteine biosynthesis; L-homocysteine from S-adenosyl-L-homocysteine: step 1/1. In terms of biological role, may play a key role in the regulation of the intracellular concentration of adenosylhomocysteine. In Brucella melitensis biotype 2 (strain ATCC 23457), this protein is Adenosylhomocysteinase.